A 203-amino-acid chain; its full sequence is UPF0637 protein MCCL_0722 (203 aa).

It belongs to the UPF0637 family.

The protein is UPF0637 protein MCCL_0722 of Macrococcus caseolyticus (strain JCSC5402) (Macrococcoides caseolyticum).